The primary structure comprises 401 residues: Ninja-family protein MODD (401 aa).

Disordered stretches follow at residues 95 to 135 (KQGV…GEGR) and 215 to 238 (TGNKKTGGNVNHSSDRNRCTGLPP). Low complexity predominate over residues 105–130 (RPSGGAEAEPAAARLPASGSPSSGSS). The span at 217 to 226 (NKKTGGNVNH) shows a compositional bias: polar residues.

The protein belongs to the Ninja family. In terms of assembly, interacts with BZIP46, TPR3 and PUB70.

The protein resides in the nucleus. Functionally, acts as a negative regulator of abscisic acid (ABA) signaling and drought tolerance. Mediates deactivation and degradation of BZIP46, a positive regulator of ABA signaling and drought stress tolerance. Represses BZIP46 activity via interaction with the TPR3-HDAC1 corepressor complex and down-regulation of the histone acetylation level at BZIP46 target genes. Promotes BZIP46 degradation via interaction with the U-box type ubiquitin E3 ligase PUB70. This Oryza sativa subsp. japonica (Rice) protein is Ninja-family protein MODD.